Consider the following 107-residue polypeptide: Sperm-specific class P protein 31 (107 aa).

The MSP domain occupies 1-107 (MINIDPPSGD…GEVVVKMVAS (107 aa)).

Expressed at higher level in testis.

The chain is Sperm-specific class P protein 31 (ssp-31) from Caenorhabditis elegans.